We begin with the raw amino-acid sequence, 115 residues long: U3-lycotoxin-Ls1q (115 aa).

The first 20 residues, 1–20, serve as a signal peptide directing secretion; it reads MKFVLLFGVLLVTLFSYSSA. Residues 21 to 44 constitute a propeptide that is removed on maturation; that stretch reads EMFDDFDQADEDELLSLIEKEEAR. Cystine bridges form between cysteine 48-cysteine 63, cysteine 55-cysteine 72, cysteine 62-cysteine 87, and cysteine 74-cysteine 85.

Belongs to the neurotoxin 19 (CSTX) family. 01 subfamily. As to expression, expressed by the venom gland.

Its subcellular location is the secreted. This is U3-lycotoxin-Ls1q from Lycosa singoriensis (Wolf spider).